A 129-amino-acid polypeptide reads, in one-letter code: Large ribosomal subunit protein bL12 (129 aa).

It belongs to the bacterial ribosomal protein bL12 family. Homodimer. Part of the ribosomal stalk of the 50S ribosomal subunit. Forms a multimeric L10(L12)X complex, where L10 forms an elongated spine to which 2 to 4 L12 dimers bind in a sequential fashion. Binds GTP-bound translation factors.

Forms part of the ribosomal stalk which helps the ribosome interact with GTP-bound translation factors. Is thus essential for accurate translation. In Treponema pallidum (strain Nichols), this protein is Large ribosomal subunit protein bL12.